We begin with the raw amino-acid sequence, 164 residues long: UPF0304 protein YfbU (164 aa).

The protein belongs to the UPF0304 family.

This chain is UPF0304 protein YfbU, found in Salmonella enteritidis PT4 (strain P125109).